We begin with the raw amino-acid sequence, 125 residues long: Holo-[acyl-carrier-protein] synthase (125 aa).

Positions 8 and 57 each coordinate Mg(2+).

This sequence belongs to the P-Pant transferase superfamily. AcpS family. The cofactor is Mg(2+).

It is found in the cytoplasm. The catalysed reaction is apo-[ACP] + CoA = holo-[ACP] + adenosine 3',5'-bisphosphate + H(+). Its function is as follows. Transfers the 4'-phosphopantetheine moiety from coenzyme A to a Ser of acyl-carrier-protein. The sequence is that of Holo-[acyl-carrier-protein] synthase from Thermus thermophilus (strain ATCC BAA-163 / DSM 7039 / HB27).